Consider the following 63-residue polypeptide: Small ribosomal subunit protein eS31 (63 aa).

Zn(2+) is bound by residues cysteine 34, cysteine 37, cysteine 53, and cysteine 56. The C4-type zinc-finger motif lies at 34–56 (CPKCGSVMAFHREPVPRWHCGKC).

This sequence belongs to the eukaryotic ribosomal protein eS31 family. Part of the 30S ribosomal subunit. Requires Zn(2+) as cofactor.

The protein is Small ribosomal subunit protein eS31 of Pyrobaculum neutrophilum (strain DSM 2338 / JCM 9278 / NBRC 100436 / V24Sta) (Thermoproteus neutrophilus).